Here is a 247-residue protein sequence, read N- to C-terminus: Carboxy-S-adenosyl-L-methionine synthase (247 aa).

Residues Tyr39, 64–66 (GCS), 89–90 (DN), 117–118 (DI), Asn132, and Arg199 contribute to the S-adenosyl-L-methionine site.

The protein belongs to the class I-like SAM-binding methyltransferase superfamily. Cx-SAM synthase family. As to quaternary structure, homodimer.

The catalysed reaction is prephenate + S-adenosyl-L-methionine = carboxy-S-adenosyl-L-methionine + 3-phenylpyruvate + H2O. Its function is as follows. Catalyzes the conversion of S-adenosyl-L-methionine (SAM) to carboxy-S-adenosyl-L-methionine (Cx-SAM). The polypeptide is Carboxy-S-adenosyl-L-methionine synthase (Escherichia coli O127:H6 (strain E2348/69 / EPEC)).